The following is a 78-amino-acid chain: Large ribosomal subunit protein bL28 (78 aa).

It belongs to the bacterial ribosomal protein bL28 family.

The sequence is that of Large ribosomal subunit protein bL28 from Erwinia tasmaniensis (strain DSM 17950 / CFBP 7177 / CIP 109463 / NCPPB 4357 / Et1/99).